The chain runs to 666 residues: tRNA 5-methylaminomethyl-2-thiouridine biosynthesis bifunctional protein MnmC (666 aa).

The segment at 1 to 245 (MKQYAIQPAT…KREMLCGVME (245 aa)) is tRNA (mnm(5)s(2)U34)-methyltransferase. The tract at residues 270-666 (IGGGIASALL…RKLLKGKAVK (397 aa)) is FAD-dependent cmnm(5)s(2)U34 oxidoreductase.

The protein in the N-terminal section; belongs to the methyltransferase superfamily. tRNA (mnm(5)s(2)U34)-methyltransferase family. In the C-terminal section; belongs to the DAO family. FAD serves as cofactor.

The protein localises to the cytoplasm. The catalysed reaction is 5-aminomethyl-2-thiouridine(34) in tRNA + S-adenosyl-L-methionine = 5-methylaminomethyl-2-thiouridine(34) in tRNA + S-adenosyl-L-homocysteine + H(+). In terms of biological role, catalyzes the last two steps in the biosynthesis of 5-methylaminomethyl-2-thiouridine (mnm(5)s(2)U) at the wobble position (U34) in tRNA. Catalyzes the FAD-dependent demodification of cmnm(5)s(2)U34 to nm(5)s(2)U34, followed by the transfer of a methyl group from S-adenosyl-L-methionine to nm(5)s(2)U34, to form mnm(5)s(2)U34. This is tRNA 5-methylaminomethyl-2-thiouridine biosynthesis bifunctional protein MnmC from Salmonella choleraesuis (strain SC-B67).